We begin with the raw amino-acid sequence, 354 residues long: cAMP-dependent protein kinase catalytic subunit 2 (354 aa).

Residues 45-301 enclose the Protein kinase domain; that stretch reads YITRAVLGNG…SSDVKSHPWF (257 aa). ATP is bound by residues 51 to 59 and Lys74; that span reads LGNGSFGTV. Asp168 (proton acceptor) is an active-site residue. In terms of domain architecture, AGC-kinase C-terminal spans 302–354; sequence QGVDWFGILNQEVTAPYQPTISGAEDLSNFENFEFKDRYKSRINRHPELFANF.

The protein belongs to the protein kinase superfamily. AGC Ser/Thr protein kinase family. cAMP subfamily. As to expression, more abundant in adult body than adult head.

The catalysed reaction is L-seryl-[protein] + ATP = O-phospho-L-seryl-[protein] + ADP + H(+). It catalyses the reaction L-threonyl-[protein] + ATP = O-phospho-L-threonyl-[protein] + ADP + H(+). This is cAMP-dependent protein kinase catalytic subunit 2 (Pka-C2) from Drosophila melanogaster (Fruit fly).